Reading from the N-terminus, the 318-residue chain is MAEFKHVTVLLKEAVAGLNVQPTGTYVDATLGGGGHTQAILQQLVDGHLYSFDQDQTAIDYNKEHLKTAIEQQKLTLVEDNFRNLKAELNSYNVKHVNGILYDLGVSSPQFDDAKRGFSYQHDAPLDMRMNQEQKLSAMEVVNEWPYERLVKILYRYGEEKFAKSIARKIEQRRKVAPIKTTFELVDVIKEGIPAAARRHGGHPAKKSFQAIRIAVNDELGALEESLEQALDLLDVGGRISVITFQSLEDRLVKTMFREKTSLSGDVPQGLPVIPAGMEPNFKLINKKPIVASDEELAANHRAHSAKLRIIEKIREGK.

Residues 34-36 (GGH), Asp53, Phe82, Asp103, and Gln110 contribute to the S-adenosyl-L-methionine site.

It belongs to the methyltransferase superfamily. RsmH family.

Its subcellular location is the cytoplasm. The enzyme catalyses cytidine(1402) in 16S rRNA + S-adenosyl-L-methionine = N(4)-methylcytidine(1402) in 16S rRNA + S-adenosyl-L-homocysteine + H(+). Functionally, specifically methylates the N4 position of cytidine in position 1402 (C1402) of 16S rRNA. The polypeptide is Ribosomal RNA small subunit methyltransferase H (Limosilactobacillus reuteri (strain DSM 20016) (Lactobacillus reuteri)).